The sequence spans 614 residues: MIKKASLLTACSVTAFSAWAQDTSPDTLVVTANRFEQPRSTVLAPTTVVTRQDIDRWQSTSVNDVLRRLPGVDITQNGGSGQLSSIFIRGTNASHVLVLIDGVRLNLAGVSGSADLSQFPIALVQRVEYIRGPRSAVYGSDAIGGVVNIITTRDEPGTEISAGWGSNSYQNYDVSTQQQLGDKTRVTLLGDYAHTHGYDVVAYGNTGTQAQTDNDGFLSKTLYGALEHNFTDAWSGFVRGYGYDNRTNYDAYYSPGSPLLDTRKLYSQSWDAGLRYNGELIKSQLITSYSHSKDYNYDPHFGRYDSSATLDEMKQYTVQWANNVIVGHGSIGAGVDWQKQTTTPGTGYVENGYDQRNTGIYLTGLQQVGDFTFEGAARNDDNSQFGRHGTWQTSAGWEFIEGYRFIASYGTSYKAPNLGQLYGFYGNPNLDPEKSKQWEGAFEGLTAGVNWRISGYRNDVSDLIDYDDHTLKYYNEGKARIKGVEATANFDTGPLTHTVSYDYVDARNAITDTPLLRRAKQQVKYQLDWQLYDFDWGITYQYLGTRYDKDYSSYPYQTVKMGGVSLWDLAVAYPVTSHLTVRGKIANLFDKDYETVYGYQTAGREYTLSGSYTF.

Residues 1 to 20 form the signal peptide; sequence MIKKASLLTACSVTAFSAWA. Positions 26 to 33 match the TonB box motif; sequence DTLVVTAN. The TBDR plug domain maps to 38 to 152; that stretch reads PRSTVLAPTT…IGGVVNIITT (115 aa). Residues leucine 83, serine 85, asparagine 92, and 110-111 contribute to the cyanocob(III)alamin site; that span reads VS. The region spanning 155 to 614 is the TBDR beta-barrel domain; it reads EPGTEISAGW…EYTLSGSYTF (460 aa). A run of 3 beta stranded transmembrane segments spans residues 158-165, 169-178, and 184-195; these read TEISAGWG, YQNYDVSTQQ, and TRVTLLGDYAHT. Residues aspartate 199, glutamine 211, aspartate 213, and aspartate 215 each coordinate Ca(2+). Transmembrane regions (beta stranded) follow at residues 217 to 227 and 232 to 248; these read FLSKTLYGALE and DAWS…NRTN. Positions 249 and 250 each coordinate Ca(2+). Alanine 251 contributes to the cyanocob(III)alamin binding site. Aspartate 261 serves as a coordination point for Ca(2+). Beta stranded transmembrane passes span 263–277, 279–296, 309–325, 328–337, 353–369, 371–381, 385–400, 403–417, 434–443, 449–458, 473–490, 494–509, 517–529, and 535–550; these read RKLY…LRYN, ELIK…KDYN, TLDE…NNVI, HGSIGAGVDW, YDQR…QQVG, FTFEGAARNDD, FGRH…WEFI, YRFI…KAPN, KSKQWEGAFE, VNWRISGYRN, YYNE…TANF, PLTH…ARNA, RRAK…QLDW, and DWGI…YDKD. Position 309 (threonine 309) interacts with cyanocob(III)alamin. Arginine 517 serves as a coordination point for cyanocob(III)alamin. Tyrosine 551 contacts cyanocob(III)alamin. The next 3 beta stranded transmembrane spans lie at 558-572, 585-596, and 602-614; these read TVKM…LAVA, IANLFDKDYETV, and AGRE…SYTF. A TonB C-terminal box motif is present at residues 597-614; the sequence is YGYQTAGREYTLSGSYTF.

The protein belongs to the TonB-dependent receptor family. BtuB (TC 1.B.14.3.1) subfamily.

It localises to the cell outer membrane. Functionally, involved in the active translocation of vitamin B12 (cyanocobalamin) across the outer membrane to the periplasmic space. It derives its energy for transport by interacting with the trans-periplasmic membrane protein TonB. The polypeptide is Vitamin B12 transporter BtuB (Escherichia coli O139:H28 (strain E24377A / ETEC)).